A 139-amino-acid chain; its full sequence is UPF0225 protein Bpro_4182 (139 aa).

Belongs to the UPF0225 family.

This Polaromonas sp. (strain JS666 / ATCC BAA-500) protein is UPF0225 protein Bpro_4182.